Consider the following 852-residue polypeptide: DNA mismatch repair protein MutS (852 aa).

An ATP-binding site is contributed by 602-609; sequence GPNMSGKS.

It belongs to the DNA mismatch repair MutS family.

In terms of biological role, this protein is involved in the repair of mismatches in DNA. It is possible that it carries out the mismatch recognition step. This protein has a weak ATPase activity. This chain is DNA mismatch repair protein MutS, found in Streptococcus thermophilus (strain CNRZ 1066).